The sequence spans 208 residues: MATSAVPSDNLPTYKLVVVGDGGVGKSALTIQFFQKIFVPDYDPTIEDSYLKHTEIDNQWAILDVLDTAGQEEFSAMREQYMRTGDGFLIVYSVTDKASFEHVDRFHQLILRVKDRESFPMILVANKVDLMHLRKVTRDQGKEMATKYNIPYIETSAKDPPLNVDKTFHDLVRVIRQQVPEKNQKKKKKTKWRGDRATGTHKLQCVIL.

Residues aspartate 21, glycine 22, glycine 23, valine 24, glycine 25, lysine 26, serine 27, alanine 28, phenylalanine 38, valine 39, proline 40, tyrosine 42, proline 44, and threonine 45 each contribute to the GTP site. Serine 27 contributes to the Mg(2+) binding site. The Effector region motif lies at 42–50 (YDPTIEDSY). Mg(2+) is bound by residues threonine 45 and aspartate 67. Residues glycine 70, asparagine 126, lysine 127, aspartate 129, serine 156, alanine 157, and lysine 158 each coordinate GTP. Position 205 is a cysteine methyl ester (cysteine 205). Cysteine 205 carries the S-geranylgeranyl cysteine lipid modification. Positions 206 to 208 (VIL) are cleaved as a propeptide — removed in mature form.

Belongs to the small GTPase superfamily. Ras family. As to quaternary structure, component of the SHOC2-MRAS-PP1c (SMP) holophosphatase complex consisting of SHOC2, GTP-bound M-Ras/MRAS and the catalytic subunit of protein phosphatase 1 (either PPP1CA, PPP1CB or PPP1CC). Interacts (active GTP-bound form) with both SHOC2 and PP1c (all isoforms) to form a tertiary complex; SHOC2 and PP1c preferably bind M-Ras/MRAS, but they also bind K-Ras/KRAS, N-Ras/NRAS and H-Ras/HRAS. Interacts with RGL3. Interacts (active GTP-bound form preferentially) with RGS14. The cofactor is Mg(2+). Expressed in skeletal muscle cells.

Its subcellular location is the cell membrane. It catalyses the reaction GTP + H2O = GDP + phosphate + H(+). In terms of biological role, signal transducer in the Ras-MAPK signaling pathway that regulates cell proliferation and survival. Core component of the SHOC2-MRAS-PP1c (SMP) holophosphatase complex that regulates the MAPK pathway activation. The formation of the SMP complex only occurs when MRAS is GTP-bound. MRAS has low intrinsic GTPase activity and may require additional factors for activation. The SMP complex specifically dephosphorylates the inhibitory phosphorylation at 'Ser-259' of RAF1 kinase, 'Ser-365' of BRAF kinase and 'Ser-214' of ARAF kinase, stimulating their kinase activities. This is Ras-related protein M-Ras (Mras) from Rattus norvegicus (Rat).